We begin with the raw amino-acid sequence, 312 residues long: Olfactory receptor 5p57 (312 aa).

Topologically, residues 1–25 (MEPGNYTVVTEFILLGLTDDITVSV) are extracellular. The N-linked (GlcNAc...) asparagine glycan is linked to asparagine 5. Residues 26-46 (ILFVMFLIVYSVTLMGNLNII) traverse the membrane as a helical segment. Residues 47-54 (VLIRTSPQ) are Cytoplasmic-facing. The helical transmembrane segment at 55 to 75 (LHTPMYLFLSHLAFLDIGYSS) threads the bilayer. Residues 76-99 (SVTPIMLRGFLRKGTFIPVAGCVA) are Extracellular-facing. A disulfide bridge links cysteine 97 with cysteine 189. Residues 100-120 (QLCIVVAFGTSESFLLASMAY) form a helical membrane-spanning segment. The Cytoplasmic portion of the chain corresponds to 121-133 (DRYVAICSPLLYS). A helical transmembrane segment spans residues 134-154 (TQMSSTVCILLVGTSYLGGWV). Over 155–196 (NAWIFTGCSLNLSFCGPNKINHFFCDYSPLLKLSCSHDFSFE) the chain is Extracellular. Asparagine 165 carries N-linked (GlcNAc...) asparagine glycosylation. A helical membrane pass occupies residues 197–217 (VIPAISSGSIIVVTVFIIALS). The Cytoplasmic portion of the chain corresponds to 218-237 (YVYILVSILKMRSTEGRQKA). The helical transmembrane segment at 238–258 (FSTCTSHLTAVTLFFGTITFI) threads the bilayer. The Extracellular portion of the chain corresponds to 259-271 (YVMPQSSYSTDQN). A helical membrane pass occupies residues 272–292 (KVVSVFYTVVIPMLNPLIYSF). Topologically, residues 293–312 (RNKEVKEAMKKLIAKTHWWS) are cytoplasmic.

This sequence belongs to the G-protein coupled receptor 1 family.

It localises to the cell membrane. Its function is as follows. Probable odorant receptor, which recognizes only aliphatic alcohols, suggesting that it may convey a 'woody' or 'sweet' sour. This Mus musculus (Mouse) protein is Olfactory receptor 5p57.